A 169-amino-acid polypeptide reads, in one-letter code: X polypeptide (169 aa).

This sequence belongs to the IagB/IpgF/P19 family.

The chain is X polypeptide (X) from Escherichia coli.